Reading from the N-terminus, the 346-residue chain is Mannonate dehydratase (346 aa).

It belongs to the mannonate dehydratase family. It depends on Fe(2+) as a cofactor. Mn(2+) is required as a cofactor.

It catalyses the reaction D-mannonate = 2-dehydro-3-deoxy-D-gluconate + H2O. The protein operates within carbohydrate metabolism; pentose and glucuronate interconversion. Catalyzes the dehydration of D-mannonate. The protein is Mannonate dehydratase of Cupriavidus taiwanensis (strain DSM 17343 / BCRC 17206 / CCUG 44338 / CIP 107171 / LMG 19424 / R1) (Ralstonia taiwanensis (strain LMG 19424)).